We begin with the raw amino-acid sequence, 1229 residues long: Alpha,alpha-trehalose-phosphate synthase [UDP-forming] 2 (1229 aa).

The interval 196–233 (VSSDSEGEEAIHNVRSGTHTESESEEDPKAPRSGLATS) is disordered. Residues 213–225 (THTESESEEDPKA) are compositionally biased toward basic and acidic residues.

In the N-terminal section; belongs to the glycosyltransferase 20 family. The protein in the C-terminal section; belongs to the gob-1 trehalose phosphatase family.

It carries out the reaction D-glucose 6-phosphate + UDP-alpha-D-glucose = alpha,alpha-trehalose 6-phosphate + UDP + H(+). Catalyzes the production of trehalose from glucose-6-phosphate and UDP-alpha-D-glucose in a 2 step process. This chain is Alpha,alpha-trehalose-phosphate synthase [UDP-forming] 2 (tps-2), found in Caenorhabditis elegans.